The chain runs to 232 residues: Small ribosomal subunit protein uS3 (232 aa).

The region spanning 39–107 is the KH type-2 domain; that stretch reads VRQFLTKELA…PAQINIAEVR (69 aa).

Belongs to the universal ribosomal protein uS3 family. Part of the 30S ribosomal subunit. Forms a tight complex with proteins S10 and S14.

In terms of biological role, binds the lower part of the 30S subunit head. Binds mRNA in the 70S ribosome, positioning it for translation. This Yersinia pestis bv. Antiqua (strain Antiqua) protein is Small ribosomal subunit protein uS3.